Here is a 59-residue protein sequence, read N- to C-terminus: Single-pass membrane and coiled-coil domain-containing protein 4 (59 aa).

The disordered stretch occupies residues 1–23; that stretch reads MRQLKGKPKKETSKDKRERKQAM. Residues 9–23 show a composition bias toward basic and acidic residues; sequence KKETSKDKRERKQAM. Residues 9–30 adopt a coiled-coil conformation; that stretch reads KKETSKDKRERKQAMQDARKQV. A helical transmembrane segment spans residues 32–52; the sequence is TVVLPTVAVVVLLIVFFVYAA.

This sequence belongs to the SMCO4 family.

It localises to the membrane. The polypeptide is Single-pass membrane and coiled-coil domain-containing protein 4 (smco4) (Takifugu rubripes (Japanese pufferfish)).